A 944-amino-acid polypeptide reads, in one-letter code: snRNA-activating protein complex subunit 4 homolog (944 aa).

Positions Met1–Asp22 are disordered. The span at Ala11–Asp22 shows a compositional bias: polar residues. The 68-residue stretch at Thr177–Leu244 folds into the Myb-like 1 domain. Residues Asn245–Ser301 form the HTH myb-type 1 domain. The H-T-H motif DNA-binding region spans Trp273–Val297. The Myb-like 2 domain occupies Trp304–Leu350. HTH myb-type domains lie at Asp351–Ala406 and His407–Leu459. 2 consecutive DNA-binding regions (H-T-H motif) follow at residues Trp379–Leu402 and Trp432–Ile455. Positions Ala911–Ala921 are enriched in low complexity. The tract at residues Ala911–Ser935 is disordered. Over residues Gly922–Ser935 the composition is skewed to polar residues.

In terms of tissue distribution, broadly expressed in all tissues, including head, vulva and tail.

Its subcellular location is the nucleus. In terms of biological role, binds to the promoter regions of RNA polymerase II and III small-nuclear RNA genes, type 3 RNA polymerase III non-coding RNA genes, small nucleolar RNAs and transfer RNA genes. Required for expression of mature 21U-RNAs. The protein is snRNA-activating protein complex subunit 4 homolog of Caenorhabditis elegans.